The primary structure comprises 673 residues: UvrABC system protein C (673 aa).

The GIY-YIG domain occupies 16-95 (VEPGVYKFRD…IKEFDPRFNV (80 aa)). The 36-residue stretch at 208 to 243 (DKMVRELERRMHAAAEDLDFETAARLRDDVQALRRA) folds into the UVR domain. The segment at 488 to 526 (RDEAERDELDGTAAGAPLVDDDETPTSRPGIDPTTGRPR) is disordered.

The protein belongs to the UvrC family. In terms of assembly, interacts with UvrB in an incision complex.

Its subcellular location is the cytoplasm. Functionally, the UvrABC repair system catalyzes the recognition and processing of DNA lesions. UvrC both incises the 5' and 3' sides of the lesion. The N-terminal half is responsible for the 3' incision and the C-terminal half is responsible for the 5' incision. This is UvrABC system protein C from Nocardia farcinica (strain IFM 10152).